A 1142-amino-acid polypeptide reads, in one-letter code: Collagen alpha-1(XIX) chain (1142 aa).

Positions 1–23 (MRLTGPWKLWLWMSIFLLPASTS) are cleaved as a signal peptide. The Laminin G-like domain maps to 50–234 (NKLEVSGFDL…LHQLKIYCSA (185 aa)). 3 disordered regions span residues 288 to 680 (IPNK…GDPI), 704 to 1009 (PGLK…PGIP), and 1053 to 1142 (YGRP…TGGN). 3 Collagen-like domains span residues 292-349 (GEAG…GEKG), 350-391 (DPAL…ALPG), and 392-433 (SLGI…GIQG). Positions 292–351 (GEAGLPGAPGSPGQKGHKGEPGENGLHGAPGFPGQKGEQGFEGSKGETGEKGEQGEKGDP) are triple-helical region 1 (COL1). Basic and acidic residues predominate over residues 335 to 350 (SKGETGEKGEQGEKGD). A triple-helical region 2 (COL2) region spans residues 370-429 (GPPGPKGEKGDTGPPGPPALPGSLGIQGPQGPPGKEGQRGRRGKTGPPGKPGPPGPPGPP). Low complexity predominate over residues 390–404 (PGSLGIQGPQGPPGK). Residues 417 to 429 (PGKPGPPGPPGPP) show a composition bias toward pro residues. Composition is skewed to basic and acidic residues over residues 444 to 463 (KDNK…DKGE) and 478 to 496 (QKGE…DRGE). Positions 448–688 (GNDEHEAGGL…PIALPLLGDI (241 aa)) are triple-helical region 3 (COL3). 8 Collagen-like domains span residues 474–516 (GPKG…GPPG), 568–624 (GPPG…GPQG), 626–678 (GIPG…PPGD), 728–778 (KGDI…APGP), 779–814 (TGPP…PPGP), 845–903 (GPPG…VPGE), 904–947 (PGER…GDRG), and 948–1004 (PKGE…GSPG). The segment covering 640 to 651 (PGIQGPRGLPGL) has biased composition (low complexity). The interval 700 to 818 (QASVPGLKSN…PGPPGPPGIP (119 aa)) is triple-helical region 4 (COL4). Composition is skewed to basic and acidic residues over residues 720–731 (GKYDSMARKGDI) and 743–752 (EGPKGSKGER). Composition is skewed to pro residues over residues 806 to 817 (PGKPGPPGPPGI) and 840 to 852 (YPGP…PKGD). The segment at 833 to 1012 (GGVNVPSYPG…PGIPGIPADA (180 aa)) is triple-helical region 5 (COL5). Basic and acidic residues predominate over residues 943–954 (PGDRGPKGERGD). The Cell attachment site motif lies at 952–954 (RGD). Residues 1054 to 1111 (GRPGPPGKDGLPGPPGDPGPQGYRGQKGERGEPGIGLPGSPGLPGTSALGLPGSPGAP) form a triple-helical region 6 (COL6) region. Low complexity predominate over residues 1093–1107 (SPGLPGTSALGLPGS). Residues 1108-1119 (PGAPGPQGPPGP) are compositionally biased toward pro residues.

This sequence belongs to the fibril-associated collagens with interrupted helices (FACIT) family. As to quaternary structure, oligomer; disulfide-linked. Post-translationally, prolines at the third position of the tripeptide repeating unit (G-X-Y) are hydroxylated in some or all of the chains. In terms of tissue distribution, localized to vascular, neuronal, mesenchymal, and some epithelial basement membrane zones in umbilical cord.

The protein localises to the secreted. The protein resides in the extracellular space. It localises to the extracellular matrix. Its function is as follows. May act as a cross-bridge between fibrils and other extracellular matrix molecules. Involved in skeletal myogenesis in the developing esophagus. May play a role in organization of the pericellular matrix or the sphinteric smooth muscle. The polypeptide is Collagen alpha-1(XIX) chain (COL19A1) (Homo sapiens (Human)).